The following is a 699-amino-acid chain: Elongation factor G (699 aa).

A tr-type G domain is found at asparagine 10–threonine 292. Residues alanine 19 to threonine 26, aspartate 90 to histidine 94, and asparagine 144 to aspartate 147 contribute to the GTP site. The disordered stretch occupies residues threonine 292 to serine 312.

This sequence belongs to the TRAFAC class translation factor GTPase superfamily. Classic translation factor GTPase family. EF-G/EF-2 subfamily.

It is found in the cytoplasm. In terms of biological role, catalyzes the GTP-dependent ribosomal translocation step during translation elongation. During this step, the ribosome changes from the pre-translocational (PRE) to the post-translocational (POST) state as the newly formed A-site-bound peptidyl-tRNA and P-site-bound deacylated tRNA move to the P and E sites, respectively. Catalyzes the coordinated movement of the two tRNA molecules, the mRNA and conformational changes in the ribosome. The polypeptide is Elongation factor G (Coxiella burnetii (strain CbuG_Q212) (Coxiella burnetii (strain Q212))).